Consider the following 603-residue polypeptide: Elongation factor 4 (603 aa).

One can recognise a tr-type G domain in the interval 7 to 189 (VRIRNFCIIA…AVVERIPPPP (183 aa)). GTP is bound by residues 19-24 (DHGKST) and 136-139 (NKID).

Belongs to the TRAFAC class translation factor GTPase superfamily. Classic translation factor GTPase family. LepA subfamily.

The protein resides in the cell inner membrane. The enzyme catalyses GTP + H2O = GDP + phosphate + H(+). Functionally, required for accurate and efficient protein synthesis under certain stress conditions. May act as a fidelity factor of the translation reaction, by catalyzing a one-codon backward translocation of tRNAs on improperly translocated ribosomes. Back-translocation proceeds from a post-translocation (POST) complex to a pre-translocation (PRE) complex, thus giving elongation factor G a second chance to translocate the tRNAs correctly. Binds to ribosomes in a GTP-dependent manner. In Nostoc punctiforme (strain ATCC 29133 / PCC 73102), this protein is Elongation factor 4.